A 245-amino-acid polypeptide reads, in one-letter code: Photosystem II protein PSBS2 (245 aa).

Residues 1 to 25 (MAMTLSTKAFAQRGVSARKNTVRVY) constitute a chloroplast transit peptide. Helical transmembrane passes span 72–92 (LFVG…EILT), 108–128 (GIEV…AAVL), 185–205 (LGFA…LAQF), and 217–237 (EFGL…EGSG).

The protein belongs to the ELIP/psbS family.

The protein localises to the plastid. Its subcellular location is the chloroplast thylakoid membrane. In terms of biological role, required for non-photochemical quenching (NPQ), a mechanism that converts and dissipates the harmful excess absorbed light energy into heat and protect the photosynthetic apparatus from photo-oxidative damage. Seems involved in the activation of NPQ, possibly by promoting conformational changes required for activation of LHCSR3-dependent quenching in the antenna of photosystem II (PSII). The sequence is that of Photosystem II protein PSBS2 from Chlamydomonas reinhardtii (Chlamydomonas smithii).